A 149-amino-acid chain; its full sequence is 3-dehydroquinate dehydratase (149 aa).

The active-site Proton acceptor is Tyr-26. Substrate is bound by residues Asn-77, His-83, and Asp-90. Catalysis depends on His-103, which acts as the Proton donor. Substrate-binding positions include Leu-104 to Ser-105 and Arg-114.

This sequence belongs to the type-II 3-dehydroquinase family. As to quaternary structure, homododecamer.

It carries out the reaction 3-dehydroquinate = 3-dehydroshikimate + H2O. The protein operates within metabolic intermediate biosynthesis; chorismate biosynthesis; chorismate from D-erythrose 4-phosphate and phosphoenolpyruvate: step 3/7. Functionally, catalyzes a trans-dehydration via an enolate intermediate. The protein is 3-dehydroquinate dehydratase of Aliivibrio fischeri (strain MJ11) (Vibrio fischeri).